Reading from the N-terminus, the 809-residue chain is Lon protease (809 aa).

The region spanning 20-216 (LPLLALRDVV…ELMNYLMNQS (197 aa)) is the Lon N-terminal domain. 369 to 376 (GPPGVGKT) lines the ATP pocket. The Lon proteolytic domain occupies 606-787 (EAQVGRVNGL…DEILPLALTS (182 aa)). Catalysis depends on residues Ser693 and Lys736.

It belongs to the peptidase S16 family. In terms of assembly, homohexamer. Organized in a ring with a central cavity.

Its subcellular location is the cytoplasm. The enzyme catalyses Hydrolysis of proteins in presence of ATP.. In terms of biological role, ATP-dependent serine protease that mediates the selective degradation of mutant and abnormal proteins as well as certain short-lived regulatory proteins. Required for cellular homeostasis and for survival from DNA damage and developmental changes induced by stress. Degrades polypeptides processively to yield small peptide fragments that are 5 to 10 amino acids long. Binds to DNA in a double-stranded, site-specific manner. The polypeptide is Lon protease (Acinetobacter baumannii (strain AB307-0294)).